The chain runs to 312 residues: Nodulation protein D 2 (312 aa).

The HTH lysR-type domain occupies 6–63; that stretch reads LDLNLLVALDALMTKRSVTAAARSINLSQPAMSAAIARLRTYFGDDLFTMRGRELIPT. A DNA-binding region (H-T-H motif) is located at residues 23–42; it reads VTAAARSINLSQPAMSAAIA.

The protein belongs to the LysR transcriptional regulatory family.

Functionally, represses the expression of the nodABCIJ-nolO-noeI operon. The sequence is that of Nodulation protein D 2 (nodD2) from Sinorhizobium fredii (strain NBRC 101917 / NGR234).